The following is a 959-amino-acid chain: Vacuolar membrane protease (959 aa).

Residues 1-13 lie on the Cytoplasmic side of the membrane; it reads MARLNPLSFTPGP. A helical transmembrane segment spans residues 14–34; the sequence is VIFFTCAVYIALFAALLTVHL. Residues 35 to 378 are Vacuolar-facing; the sequence is RVPDYPSKTP…KVFVVFQLHT (344 aa). N-linked (GlcNAc...) asparagine glycosylation is found at Asn48, Asn102, and Asn105. Residues 128–149 are disordered; sequence GSEDDEPYHSPQSSPPGERRLD. Residues His158 and Asp170 each contribute to the Zn(2+) site. Residue Glu204 is the Proton acceptor of the active site. Zn(2+) is bound by residues Glu205, Glu230, and His303. The helical transmembrane segment at 379-399 threads the bilayer; that stretch reads MFALCVTLLVVAPLFLIGLTF. The Cytoplasmic portion of the chain corresponds to 400–432; the sequence is GLSKADKNYLFARKAYMYSSDDDHPVHLYGWRG. The chain crosses the membrane as a helical span at residues 433 to 453; that stretch reads FFRFPIVFSIATAVVVGLAYL. The Vacuolar segment spans residues 454–463; sequence MVRLNPLILY. A helical membrane pass occupies residues 464–484; sequence SSPYAVWSMMLSAWFSVAWFF. Topologically, residues 485–498 are cytoplasmic; it reads SRGASAMRPSALQR. A helical membrane pass occupies residues 499–519; that stretch reads MYALIWLFAGSFALLAFVTVL. Topologically, residues 520–524 are vacuolar; sequence SNNYQ. The helical transmembrane segment at 525–545 threads the bilayer; it reads VAGGYFALFYFAGIFLALVLS. Over 546–645 the chain is Cytoplasmic; sequence YLELFFAPTK…YPGEQDWSGK (100 aa). Disordered regions lie at residues 566 to 594 and 606 to 635; these read DEPV…DATE and FARH…LKQP. Residues 612 to 626 show a composition bias toward basic and acidic residues; the sequence is RRDSIDDENGNRDEE. The helical transmembrane segment at 646-666 threads the bilayer; it reads LPGWLWLLQLLLVAPIVVILV. The Vacuolar portion of the chain corresponds to 667 to 688; the sequence is GQIALLLTSALHQTPADGNSSL. Residue Asn685 is glycosylated (N-linked (GlcNAc...) asparagine). The chain crosses the membrane as a helical span at residues 689–709; that stretch reads FVYLAFALLTTLLLAPIGPFI. At 710–716 the chain is on the cytoplasmic side; that stretch reads HRFTWHV. A helical transmembrane segment spans residues 717–737; the sequence is PTFVFLVCVATVIYNLVAFPF. Residues 738–959 lie on the Vacuolar side of the membrane; the sequence is SREHRLKVYF…LVEGFKYFQV (222 aa). Asn785, Asn818, Asn834, Asn864, and Asn899 each carry an N-linked (GlcNAc...) asparagine glycan.

The protein belongs to the peptidase M28 family. Zn(2+) is required as a cofactor.

The protein resides in the vacuole membrane. May be involved in vacuolar sorting and osmoregulation. This Phaeosphaeria nodorum (strain SN15 / ATCC MYA-4574 / FGSC 10173) (Glume blotch fungus) protein is Vacuolar membrane protease.